Here is a 226-residue protein sequence, read N- to C-terminus: Small ribosomal subunit protein uS5 (226 aa).

A compositionally biased stretch (polar residues) spans 1-18; that stretch reads MAAPQRSRTTGAPSSGGP. Positions 1–45 are disordered; that stretch reads MAAPQRSRTTGAPSSGGPSENERGRGGDRRGGDRRGGDRRGGDDR. Residues 20–45 are compositionally biased toward basic and acidic residues; sequence ENERGRGGDRRGGDRRGGDRRGGDDR. Residues 48-111 enclose the S5 DRBM domain; it reads FVERVVTINR…EEAKKNFFRV (64 aa).

Belongs to the universal ribosomal protein uS5 family. In terms of assembly, part of the 30S ribosomal subunit. Contacts proteins S4 and S8.

In terms of biological role, with S4 and S12 plays an important role in translational accuracy. Its function is as follows. Located at the back of the 30S subunit body where it stabilizes the conformation of the head with respect to the body. The sequence is that of Small ribosomal subunit protein uS5 from Beutenbergia cavernae (strain ATCC BAA-8 / DSM 12333 / CCUG 43141 / JCM 11478 / NBRC 16432 / NCIMB 13614 / HKI 0122).